The primary structure comprises 203 residues: Urease accessory protein UreG (203 aa).

A GTP-binding site is contributed by 14 to 21; it reads GPVGSGKT.

This sequence belongs to the SIMIBI class G3E GTPase family. UreG subfamily. As to quaternary structure, homodimer. UreD, UreF and UreG form a complex that acts as a GTP-hydrolysis-dependent molecular chaperone, activating the urease apoprotein by helping to assemble the nickel containing metallocenter of UreC. The UreE protein probably delivers the nickel.

The protein localises to the cytoplasm. Its function is as follows. Facilitates the functional incorporation of the urease nickel metallocenter. This process requires GTP hydrolysis, probably effectuated by UreG. The chain is Urease accessory protein UreG from Rhizobium rhizogenes (strain K84 / ATCC BAA-868) (Agrobacterium radiobacter).